Here is a 184-residue protein sequence, read N- to C-terminus: Large ribosomal subunit protein uL5 (184 aa).

Belongs to the universal ribosomal protein uL5 family. Part of the 50S ribosomal subunit; part of the 5S rRNA/L5/L18/L25 subcomplex. Contacts the 5S rRNA and the P site tRNA. Forms a bridge to the 30S subunit in the 70S ribosome.

This is one of the proteins that bind and probably mediate the attachment of the 5S RNA into the large ribosomal subunit, where it forms part of the central protuberance. In the 70S ribosome it contacts protein S13 of the 30S subunit (bridge B1b), connecting the 2 subunits; this bridge is implicated in subunit movement. Contacts the P site tRNA; the 5S rRNA and some of its associated proteins might help stabilize positioning of ribosome-bound tRNAs. The protein is Large ribosomal subunit protein uL5 of Corynebacterium kroppenstedtii (strain DSM 44385 / JCM 11950 / CIP 105744 / CCUG 35717).